We begin with the raw amino-acid sequence, 187 residues long: Troponin I, slow skeletal muscle (187 aa).

Proline 2 carries the N-acetylproline modification. The involved in binding TNC stretch occupies residues 2–48; that stretch reads PEVERKSKITASRKLMLKSLMLAKAKECWEQEHEEREAEKVRYLSER. Serine 58 carries the phosphoserine modification. The involved in binding TNC and actin stretch occupies residues 97-118; sequence LKLKVLDLRGKFKRPPLRRVRV.

It belongs to the troponin I family. Binds to actin and tropomyosin.

Its function is as follows. Troponin I is the inhibitory subunit of troponin, the thin filament regulatory complex which confers calcium-sensitivity to striated muscle actomyosin ATPase activity. This chain is Troponin I, slow skeletal muscle (Tnni1), found in Rattus norvegicus (Rat).